A 317-amino-acid polypeptide reads, in one-letter code: Transaldolase (317 aa).

Lys132 acts as the Schiff-base intermediate with substrate in catalysis.

Belongs to the transaldolase family. Type 1 subfamily. In terms of assembly, homodimer.

It localises to the cytoplasm. It catalyses the reaction D-sedoheptulose 7-phosphate + D-glyceraldehyde 3-phosphate = D-erythrose 4-phosphate + beta-D-fructose 6-phosphate. The protein operates within carbohydrate degradation; pentose phosphate pathway; D-glyceraldehyde 3-phosphate and beta-D-fructose 6-phosphate from D-ribose 5-phosphate and D-xylulose 5-phosphate (non-oxidative stage): step 2/3. Its function is as follows. Transaldolase is important for the balance of metabolites in the pentose-phosphate pathway. The protein is Transaldolase of Shewanella amazonensis (strain ATCC BAA-1098 / SB2B).